A 203-amino-acid chain; its full sequence is Glycerol-3-phosphate acyltransferase (203 aa).

Transmembrane regions (helical) follow at residues 4–24, 56–76, 80–100, 115–135, and 149–169; these read IAYL…AVIF, LGVL…GFYL, ISVI…PVFF, IIPM…FVFL, and LIVP…VALV.

It belongs to the PlsY family. As to quaternary structure, probably interacts with PlsX.

Its subcellular location is the cell inner membrane. The catalysed reaction is an acyl phosphate + sn-glycerol 3-phosphate = a 1-acyl-sn-glycero-3-phosphate + phosphate. The protein operates within lipid metabolism; phospholipid metabolism. Its function is as follows. Catalyzes the transfer of an acyl group from acyl-phosphate (acyl-PO(4)) to glycerol-3-phosphate (G3P) to form lysophosphatidic acid (LPA). This enzyme utilizes acyl-phosphate as fatty acyl donor, but not acyl-CoA or acyl-ACP. This is Glycerol-3-phosphate acyltransferase from Glaesserella parasuis serovar 5 (strain SH0165) (Haemophilus parasuis).